The following is a 197-amino-acid chain: MSSAPAPGPAPASLTLWDEEDFQGRRCRLLSDCANVCERGGLPRVRSVKVENGVWVAFEYPDFQGQQFILEKGDYPRWSAWSGSSSHNSNQLLSFRPVLCANHNDSRVTLFEGDNFQGCKFDLVDDYPSLPSMGWASKDVGSLKVSSGAWVAYQYPGYRGYQYVLERDRHSGEFCTYGELGTQAHTGQLQSIRRVQH.

The N-terminal arm stretch occupies residues 1 to 11 (MSSAPAPGPAP). 2 Beta/gamma crystallin 'Greek key' domains span residues 12 to 52 (ASLT…KVEN) and 53 to 99 (GVWV…RPVL). The connecting peptide stretch occupies residues 100 to 105 (CANHND). Beta/gamma crystallin 'Greek key' domains follow at residues 106-147 (SRVT…KVSS) and 148-196 (GAWV…RRVQ).

This sequence belongs to the beta/gamma-crystallin family. As to quaternary structure, homo/heterodimer, or complexes of higher-order. The structure of beta-crystallin oligomers seems to be stabilized through interactions between the N-terminal arms.

Its function is as follows. Crystallins are the dominant structural components of the vertebrate eye lens. In Homo sapiens (Human), this protein is Beta-crystallin A2 (CRYBA2).